Consider the following 166-residue polypeptide: Xanthine-guanine phosphoribosyltransferase (166 aa).

5-phospho-alpha-D-ribose 1-diphosphate-binding positions include 42-43 (RG) and 99-107 (DDLTDTGKT). Residue Asp100 participates in Mg(2+) binding. Guanine is bound by residues Asp103 and Ile146. Positions 103 and 146 each coordinate xanthine. GMP contacts are provided by residues 103-107 (DTGKT) and 145-146 (WI).

This sequence belongs to the purine/pyrimidine phosphoribosyltransferase family. XGPT subfamily. As to quaternary structure, homotetramer. The cofactor is Mg(2+).

The protein localises to the cell inner membrane. It catalyses the reaction GMP + diphosphate = guanine + 5-phospho-alpha-D-ribose 1-diphosphate. It carries out the reaction XMP + diphosphate = xanthine + 5-phospho-alpha-D-ribose 1-diphosphate. The enzyme catalyses IMP + diphosphate = hypoxanthine + 5-phospho-alpha-D-ribose 1-diphosphate. Its pathway is purine metabolism; GMP biosynthesis via salvage pathway; GMP from guanine: step 1/1. The protein operates within purine metabolism; XMP biosynthesis via salvage pathway; XMP from xanthine: step 1/1. Functionally, purine salvage pathway enzyme that catalyzes the transfer of the ribosyl-5-phosphate group from 5-phospho-alpha-D-ribose 1-diphosphate (PRPP) to the N9 position of the 6-oxopurines guanine and xanthine to form the corresponding ribonucleotides GMP (guanosine 5'-monophosphate) and XMP (xanthosine 5'-monophosphate), with the release of PPi. To a lesser extent, also acts on hypoxanthine. The sequence is that of Xanthine-guanine phosphoribosyltransferase from Mesorhizobium japonicum (strain LMG 29417 / CECT 9101 / MAFF 303099) (Mesorhizobium loti (strain MAFF 303099)).